The chain runs to 324 residues: Ferrochelatase (324 aa).

Residues His-197 and Glu-278 each coordinate Fe cation.

This sequence belongs to the ferrochelatase family.

Its subcellular location is the cytoplasm. The catalysed reaction is heme b + 2 H(+) = protoporphyrin IX + Fe(2+). Its pathway is porphyrin-containing compound metabolism; protoheme biosynthesis; protoheme from protoporphyrin-IX: step 1/1. In terms of biological role, catalyzes the ferrous insertion into protoporphyrin IX. This is Ferrochelatase from Aeromonas hydrophila subsp. hydrophila (strain ATCC 7966 / DSM 30187 / BCRC 13018 / CCUG 14551 / JCM 1027 / KCTC 2358 / NCIMB 9240 / NCTC 8049).